Consider the following 369-residue polypeptide: Adenosine 3'-phospho 5'-phosphosulfate transporter 2 (369 aa).

N-linked (GlcNAc...) asparagine glycosylation occurs at Asn39. The next 6 membrane-spanning stretches (helical) occupy residues 46–66 (LTQF…YGYL), 79–99 (YGWY…LIEL), 115–135 (MLIA…LGYL), 138–158 (PTQV…GVFI), 168–188 (VSAA…DSTI), and 191–211 (NFNL…AVIG). The N-linked (GlcNAc...) asparagine glycan is linked to Asn222. The next 4 helical transmembrane spans lie at 235-255 (IGFV…PAVA), 266-285 (GYAF…VLAL), 292-314 (LLAV…LFFA), and 317-337 (FTFQ…LNVY).

It belongs to the nucleotide-sugar transporter family. SLC35B subfamily.

The protein resides in the golgi apparatus membrane. It catalyses the reaction 3'-phosphoadenylyl sulfate(in) + adenosine 3',5'-bisphosphate(out) = 3'-phosphoadenylyl sulfate(out) + adenosine 3',5'-bisphosphate(in). Functionally, probably functions as a 3'-phosphoadenylyl sulfate:adenosine 3',5'-bisphosphate antiporter at the Golgi membranes. Mediates the transport from the cytosol into the lumen of the Golgi of 3'-phosphoadenylyl sulfate/adenosine 3'-phospho 5'-phosphosulfate (PAPS), a universal sulfuryl donor for sulfation events that take place in that compartment. This is Adenosine 3'-phospho 5'-phosphosulfate transporter 2 from Mus musculus (Mouse).